Consider the following 814-residue polypeptide: Lon protease 1 (814 aa).

Residues 1 to 17 (MTDDRDKTNEDPEKIIE) are compositionally biased toward basic and acidic residues. The interval 1 to 28 (MTDDRDKTNEDPEKIIEADFNPEDPDDA) is disordered. The Lon N-terminal domain occupies 49–245 (LPIIPLRPRP…KVLVLLKKEL (197 aa)). ATP is bound at residue 398–405 (GPPGVGKT). Residues 633 to 814 (EDVPGVVTGL…YRDVYQVAFG (182 aa)) form the Lon proteolytic domain. Catalysis depends on residues Ser-721 and Lys-764.

Belongs to the peptidase S16 family. In terms of assembly, homohexamer. Organized in a ring with a central cavity.

It is found in the cytoplasm. The enzyme catalyses Hydrolysis of proteins in presence of ATP.. ATP-dependent serine protease that mediates the selective degradation of mutant and abnormal proteins as well as certain short-lived regulatory proteins. Required for cellular homeostasis and for survival from DNA damage and developmental changes induced by stress. Degrades polypeptides processively to yield small peptide fragments that are 5 to 10 amino acids long. Binds to DNA in a double-stranded, site-specific manner. The polypeptide is Lon protease 1 (Syntrophotalea carbinolica (strain DSM 2380 / NBRC 103641 / GraBd1) (Pelobacter carbinolicus)).